A 101-amino-acid polypeptide reads, in one-letter code: Chaperone modulatory protein CbpM (101 aa).

It belongs to the CbpM family.

Its function is as follows. Interacts with CbpA and inhibits both the DnaJ-like co-chaperone activity and the DNA binding activity of CbpA. Together with CbpA, modulates the activity of the DnaK chaperone system. Does not inhibit the co-chaperone activity of DnaJ. The chain is Chaperone modulatory protein CbpM from Escherichia coli O1:K1 / APEC.